Consider the following 941-residue polypeptide: Isoleucine--tRNA ligase (941 aa).

A 'HIGH' region motif is present at residues 58–68 (PYANGNIHLGH). Residue glutamate 564 coordinates L-isoleucyl-5'-AMP. The 'KMSKS' region motif lies at 605–609 (KMSKS). Lysine 608 provides a ligand contact to ATP. 4 residues coordinate Zn(2+): cysteine 904, cysteine 907, cysteine 924, and cysteine 927.

This sequence belongs to the class-I aminoacyl-tRNA synthetase family. IleS type 1 subfamily. As to quaternary structure, monomer. The cofactor is Zn(2+).

It localises to the cytoplasm. The enzyme catalyses tRNA(Ile) + L-isoleucine + ATP = L-isoleucyl-tRNA(Ile) + AMP + diphosphate. Catalyzes the attachment of isoleucine to tRNA(Ile). As IleRS can inadvertently accommodate and process structurally similar amino acids such as valine, to avoid such errors it has two additional distinct tRNA(Ile)-dependent editing activities. One activity is designated as 'pretransfer' editing and involves the hydrolysis of activated Val-AMP. The other activity is designated 'posttransfer' editing and involves deacylation of mischarged Val-tRNA(Ile). This Hahella chejuensis (strain KCTC 2396) protein is Isoleucine--tRNA ligase.